We begin with the raw amino-acid sequence, 215 residues long: Ribosomal RNA small subunit methyltransferase G (215 aa).

S-adenosyl-L-methionine contacts are provided by residues Gly77, Phe82, 130–131 (IE), and Arg146.

It belongs to the methyltransferase superfamily. RNA methyltransferase RsmG family.

Its subcellular location is the cytoplasm. The catalysed reaction is guanosine(527) in 16S rRNA + S-adenosyl-L-methionine = N(7)-methylguanosine(527) in 16S rRNA + S-adenosyl-L-homocysteine. In terms of biological role, specifically methylates the N7 position of guanine in position 527 of 16S rRNA. The sequence is that of Ribosomal RNA small subunit methyltransferase G from Bartonella henselae (strain ATCC 49882 / DSM 28221 / CCUG 30454 / Houston 1) (Rochalimaea henselae).